The chain runs to 1035 residues: Sulfite reductase [NADPH] flavoprotein component (1035 aa).

The region spanning 648 to 879 (VKNFVVKVKE…VKPSVMKLPP (232 aa)) is the FAD-binding FR-type domain. Residues 684-695 (YDIGEALGIHAR) and 814-824 (LKRREYSIASS) contribute to the FAD site.

Requires FAD as cofactor. FMN is required as a cofactor.

The catalysed reaction is hydrogen sulfide + 3 NADP(+) + 3 H2O = sulfite + 3 NADPH + 4 H(+). Its pathway is sulfur metabolism; hydrogen sulfide biosynthesis; hydrogen sulfide from sulfite (NADPH route): step 1/1. In terms of biological role, this enzyme catalyzes the 6-electron reduction of sulfite to sulfide. This is one of several activities required for the biosynthesis of L-cysteine from sulfate. The chain is Sulfite reductase [NADPH] flavoprotein component (MET10) from Saccharomyces cerevisiae (strain ATCC 204508 / S288c) (Baker's yeast).